The chain runs to 121 residues: Protein ripply2.1 (121 aa).

The tract at residues 1 to 69 (MEPNQQRSCG…DKGKPPSFQH (69 aa)) is disordered. Residues 29-32 (WRPW) carry the WRPW motif motif. Residues 39 to 57 (HVQNPPTAQQQFYSDNQSH) are compositionally biased toward polar residues. The segment at 69-104 (HPVKLFWPKSRCYDFMYQEAEELLRHFPVQATISLY) is ripply homology domain.

It belongs to the ripply family. Expressed in the presomitic mesoderm (PSM) in the anterior halves of somitomeres S-0, S-I and S-II and in the newly formed somites.

Its subcellular location is the nucleus. Required during somitogenesis to regulate somite differentiation and the positioning of the presomitic mesoderm-front. Represses the expression of genes involved in somite segmentation by acting with the corepressor tle4 to down-regulate the transcriptional activity of tbx6. Also regulates retinoic acid signaling during somitogenesis and is necessary for the expression of aldh1a2/raldh2. The sequence is that of Protein ripply2.1 (ripply2.1) from Xenopus laevis (African clawed frog).